The chain runs to 1852 residues: Chitin synthase csmA (1852 aa).

The tract at residues 1 to 20 (MVGTLPAGHTPSHVQSSLPS) is disordered. The region spanning 1–787 (MVGTLPAGHT…CWADLAKVGE (787 aa)) is the Myosin motor domain. Asparagine 58 carries N-linked (GlcNAc...) asparagine glycosylation. 102–109 (GESGAGKT) is an ATP binding site. Residues 599–646 (SSKPLRMPSMARRKTSPASRLTFDATPAEDPYETESQTGSSAKNSSAK) form a disordered region. Asparagine 642 is a glycosylation site (N-linked (GlcNAc...) asparagine). The tract at residues 667–691 (LDIVNKCLTSGNLNPYFVFCLKPND) is actin-binding. Asparagine 840 carries an N-linked (GlcNAc...) asparagine glycan. A run of 2 helical transmembrane segments spans residues 895 to 915 (WMAI…RYIG) and 930 to 950 (FAIN…IVGF). One can recognise a Cytochrome b5 heme-binding domain in the interval 958 to 1017 (QHVYSPAELSSHDGKDGHSSYTSIRGLVLDLGEFMDSHYPGIVPDSALKKYAGVDSTALF). N-linked (GlcNAc...) asparagine glycans are attached at residues asparagine 1044 and asparagine 1195. The chain crosses the membrane as a helical span at residues 1205-1225 (FILAISVLICSVIVFKFFAAL). Asparagine 1428, asparagine 1462, and asparagine 1568 each carry an N-linked (GlcNAc...) asparagine glycan. 3 helical membrane passes run 1600–1620 (ISTI…VWLV), 1626–1646 (IPWT…IIFI), and 1653–1673 (MIGW…ALPL). The region spanning 1794–1849 (LPSDDAILSEIRDILRTADLMTVTKKNIKQELERRFGVNLDAKRPYINSATEAVLS) is the DEK-C domain.

The protein in the N-terminal section; belongs to the TRAFAC class myosin-kinesin ATPase superfamily. Myosin family. It in the C-terminal section; belongs to the chitin synthase family. Class V subfamily. As to quaternary structure, binds F-actin via its N-terminal myosin motor-like domain (MMD). Interacts with kibesin kinA.

Its subcellular location is the cell membrane. It is found in the cell septum. The protein resides in the cell tip. The enzyme catalyses [(1-&gt;4)-N-acetyl-beta-D-glucosaminyl](n) + UDP-N-acetyl-alpha-D-glucosamine = [(1-&gt;4)-N-acetyl-beta-D-glucosaminyl](n+1) + UDP + H(+). In terms of biological role, polymerizes chitin, a structural polymer of the cell wall and septum, by transferring the sugar moiety of UDP-GlcNAc to the non-reducing end of the growing chitin polymer. Plays an important role in polarized hyphal cell wall synthesis and maintenance of cell wall integrity. Its role in growth and morphogenesis is particularly important under low osmotic conditions. The chain is Chitin synthase csmA from Emericella nidulans (Aspergillus nidulans).